A 141-amino-acid polypeptide reads, in one-letter code: Large ribosomal subunit protein uL11 (141 aa).

This sequence belongs to the universal ribosomal protein uL11 family. As to quaternary structure, part of the ribosomal stalk of the 50S ribosomal subunit. Interacts with L10 and the large rRNA to form the base of the stalk. L10 forms an elongated spine to which L12 dimers bind in a sequential fashion forming a multimeric L10(L12)X complex. Post-translationally, one or more lysine residues are methylated.

In terms of biological role, forms part of the ribosomal stalk which helps the ribosome interact with GTP-bound translation factors. This chain is Large ribosomal subunit protein uL11, found in Synechococcus sp. (strain ATCC 27144 / PCC 6301 / SAUG 1402/1) (Anacystis nidulans).